The chain runs to 310 residues: Putative S-adenosyl-L-methionine-dependent methyltransferase Mvan_1346 (310 aa).

Residues Asp136 and 165–166 (DL) each bind S-adenosyl-L-methionine.

This sequence belongs to the UPF0677 family.

Its function is as follows. Exhibits S-adenosyl-L-methionine-dependent methyltransferase activity. This chain is Putative S-adenosyl-L-methionine-dependent methyltransferase Mvan_1346, found in Mycolicibacterium vanbaalenii (strain DSM 7251 / JCM 13017 / BCRC 16820 / KCTC 9966 / NRRL B-24157 / PYR-1) (Mycobacterium vanbaalenii).